The primary structure comprises 264 residues: S-adenosylmethionine decarboxylase proenzyme (264 aa).

Catalysis depends on Ser-113, which acts as the Schiff-base intermediate with substrate; via pyruvic acid. The residue at position 113 (Ser-113) is a Pyruvic acid (Ser); by autocatalysis. His-118 serves as the catalytic Proton acceptor; for processing activity. Cys-141 (proton donor; for catalytic activity) is an active-site residue.

It belongs to the prokaryotic AdoMetDC family. Type 2 subfamily. As to quaternary structure, heterooctamer of four alpha and four beta chains arranged as a tetramer of alpha/beta heterodimers. Pyruvate is required as a cofactor. Post-translationally, is synthesized initially as an inactive proenzyme. Formation of the active enzyme involves a self-maturation process in which the active site pyruvoyl group is generated from an internal serine residue via an autocatalytic post-translational modification. Two non-identical subunits are generated from the proenzyme in this reaction, and the pyruvate is formed at the N-terminus of the alpha chain, which is derived from the carboxyl end of the proenzyme. The post-translation cleavage follows an unusual pathway, termed non-hydrolytic serinolysis, in which the side chain hydroxyl group of the serine supplies its oxygen atom to form the C-terminus of the beta chain, while the remainder of the serine residue undergoes an oxidative deamination to produce ammonia and the pyruvoyl group blocking the N-terminus of the alpha chain.

The catalysed reaction is S-adenosyl-L-methionine + H(+) = S-adenosyl 3-(methylsulfanyl)propylamine + CO2. The protein operates within amine and polyamine biosynthesis; S-adenosylmethioninamine biosynthesis; S-adenosylmethioninamine from S-adenosyl-L-methionine: step 1/1. Its function is as follows. Catalyzes the decarboxylation of S-adenosylmethionine to S-adenosylmethioninamine (dcAdoMet), the propylamine donor required for the synthesis of the polyamines spermine and spermidine from the diamine putrescine. The sequence is that of S-adenosylmethionine decarboxylase proenzyme from Pseudomonas aeruginosa (strain ATCC 15692 / DSM 22644 / CIP 104116 / JCM 14847 / LMG 12228 / 1C / PRS 101 / PAO1).